The sequence spans 177 residues: Large ribosomal subunit protein uL6 (177 aa).

The protein belongs to the universal ribosomal protein uL6 family. Part of the 50S ribosomal subunit.

In terms of biological role, this protein binds to the 23S rRNA, and is important in its secondary structure. It is located near the subunit interface in the base of the L7/L12 stalk, and near the tRNA binding site of the peptidyltransferase center. The sequence is that of Large ribosomal subunit protein uL6 from Methanocella arvoryzae (strain DSM 22066 / NBRC 105507 / MRE50).